A 717-amino-acid polypeptide reads, in one-letter code: Polyribonucleotide nucleotidyltransferase (717 aa).

Asp487 and Asp493 together coordinate Mg(2+). One can recognise a KH domain in the interval 554 to 613 (PKIITMAINPDKIRDVIGPSGKQINKIIEETGVKIDIEQDGTVFISSINQEMNEKAKKII). In terms of domain architecture, S1 motif spans 623 to 691 (GEIYLGKVKR…KQGRVNLSRK (69 aa)).

It belongs to the polyribonucleotide nucleotidyltransferase family. The cofactor is Mg(2+).

Its subcellular location is the cytoplasm. The catalysed reaction is RNA(n+1) + phosphate = RNA(n) + a ribonucleoside 5'-diphosphate. Involved in mRNA degradation. Catalyzes the phosphorolysis of single-stranded polyribonucleotides processively in the 3'- to 5'-direction. The polypeptide is Polyribonucleotide nucleotidyltransferase (Bacillus mycoides (strain KBAB4) (Bacillus weihenstephanensis)).